The chain runs to 103 residues: Large ribosomal subunit protein bL21 (103 aa).

The protein belongs to the bacterial ribosomal protein bL21 family. In terms of assembly, part of the 50S ribosomal subunit. Contacts protein L20.

This protein binds to 23S rRNA in the presence of protein L20. The chain is Large ribosomal subunit protein bL21 from Pseudomonas syringae pv. tomato (strain ATCC BAA-871 / DC3000).